We begin with the raw amino-acid sequence, 1040 residues long: Multidrug resistance protein MdtB (1040 aa).

A run of 12 helical transmembrane segments spans residues 25–45, 347–367, 369–389, 396–416, 440–460, 472–492, 537–557, 863–883, 888–908, 910–930, 968–988, and 998–1018; these read LLMAAILLAGIIGYRFLPVAA, LMLAIALVVMIIYLFLRNIPA, IIPGVAVPLSLIGTFAVMVFL, LTLMALTIATGFVVDDAIVVI, IGFTIISLTFSLIAVLIPLLF, FAVTLAVAILISAVVSLTLTP, WLTLSVAFATLLLSVMLWIVI, LGSTVWLIVAAVVAMYIVLGV, FIHPITILSTLPTAGVGALLA, IIAGSELDIIAIIGIILLIGI, ILMTTLAALLGALPLMLSTGV, and IAMVGGLLVSQVLTLFTTPVI.

It belongs to the resistance-nodulation-cell division (RND) (TC 2.A.6) family. MdtB subfamily. In terms of assembly, part of a tripartite efflux system composed of MdtA, MdtB and MdtC. MdtB forms a heteromultimer with MdtC.

Its subcellular location is the cell inner membrane. This chain is Multidrug resistance protein MdtB, found in Salmonella dublin (strain CT_02021853).